We begin with the raw amino-acid sequence, 335 residues long: MGRLILEHTLQGHKGRIWGVAWHPKGNVFASCGEDKAIRIWSLTGNTWGTKTILSDGHKRTIREIRWSPCGQYLASASFDATTAIWSKSSGEFECNATLEGHENEVKSVSWSRSGGLLATCSRDKSVWIWEVAGDDEFECAAVLNPHTQDVKRVVWHPTKDVLASASYDNTIKMFAEEPIDNDWDCTATLTSHTSTVWGIDFDADGERLVSCSDDTTIKIWRAYHPGNTAGVATPEQQTVWKCVCTVSGQHSRAIYDVSWCKLTGLIATACGDDGIRIFKETSDSKPDEPTFEQITAEEGAHDQDVNSVQWNPVVAGQLISCSDDGTIKIWKVSE.

7 WD repeats span residues 12–51 (GHKG…WGTK), 57–96 (GHKR…FECN), 101–140 (GHEN…EFEC), 146–185 (PHTQ…NDWD), 192–231 (SHTS…NTAG), 250–289 (QHSR…KPDE), and 301–335 (AHDQ…KVSE).

The protein belongs to the WD repeat CIA1 family.

In terms of biological role, essential component of the cytosolic iron-sulfur (Fe/S) protein assembly machinery. Required for the maturation of extramitochondrial Fe/S proteins. This is Probable cytosolic iron-sulfur protein assembly protein Ciao1 from Drosophila sechellia (Fruit fly).